A 324-amino-acid chain; its full sequence is Beta-ketoacyl-[acyl-carrier-protein] synthase III (324 aa).

Residues Cys-112 and His-249 contribute to the active site. Residues 250–254 form an ACP-binding region; sequence QANIR. Residue Asn-279 is part of the active site.

The protein belongs to the thiolase-like superfamily. FabH family. Homodimer.

It localises to the cytoplasm. The catalysed reaction is malonyl-[ACP] + acetyl-CoA + H(+) = 3-oxobutanoyl-[ACP] + CO2 + CoA. It participates in lipid metabolism; fatty acid biosynthesis. Catalyzes the condensation reaction of fatty acid synthesis by the addition to an acyl acceptor of two carbons from malonyl-ACP. Catalyzes the first condensation reaction which initiates fatty acid synthesis and may therefore play a role in governing the total rate of fatty acid production. Possesses both acetoacetyl-ACP synthase and acetyl transacylase activities. Its substrate specificity determines the biosynthesis of branched-chain and/or straight-chain of fatty acids. The sequence is that of Beta-ketoacyl-[acyl-carrier-protein] synthase III from Streptococcus sanguinis (strain SK36).